Reading from the N-terminus, the 200-residue chain is Sorting nexin-10 (200 aa).

Residues Glu-8 to Leu-125 are required for interaction with ATP6V1D. Positions Phe-10 to Ser-127 constitute a PX domain. The a 1,2-diacyl-sn-glycero-3-phospho-(1D-myo-inositol-3-phosphate) site is built by Arg-53, Lys-79, and Arg-94. The span at Phe-156–Asp-167 shows a compositional bias: basic and acidic residues. The interval Phe-156–Ser-200 is disordered.

The protein belongs to the sorting nexin family. As to quaternary structure, interacts with ATP6V1D; may play a role in ciliogenesis.

It localises to the cytoplasm. Its subcellular location is the endosome membrane. The protein resides in the cytoskeleton. The protein localises to the microtubule organizing center. It is found in the centrosome. Its function is as follows. Probable phosphoinositide-binding protein involved in protein sorting and membrane trafficking in endosomes. Plays a role in cilium biogenesis through regulation of the transport and the localization of proteins to the cilium. Required for the localization to the cilium of V-ATPase subunit ATP6V1D and ATP6V0D1, and RAB8A. Involved in osteoclast differentiation and therefore bone resorption. The protein is Sorting nexin-10 (SNX10) of Bos taurus (Bovine).